Reading from the N-terminus, the 471-residue chain is MTNSTPIRSTHFDAIVIGSGPGGEGAAMGLTKANLNVAIIEREPSVGGGCTHWGTIPSKALRHAVSRIIEFNSNPLYCKNNTSLHSTFSDILGHAKSVIDKQTRMRQGFYDRNQCSLIFGEASFVEKNTVAVTAKDGSIETYTADKFIIATGSRPYRPEGINFNHSRVYDSDSILSLKHDPRHIIIYGAGVIGSEYASIFRGLGVKVDLVNTRDRLLSFLDNEMSDALSYHFWNSGIVTRNDENFEHIEANDDGVIMHLESGKKMKADCILFANGRTGNTDKLNLSAVGLEADSRGQLKVNDNYQTDVEHIYAVGDVIGYPSLASAAYDQGRFTAQAITKGKAEARLIDHIPTGIYTIPEISSVGKTEQELTAAKVPYEVGRSSFKHLARAQIAGKDIGSLKILFHRETKEILGIHCFGERAAEIIHIGQAIMEQKGEANTIEYFVNTTFNYPTMAEAYRVAALNGLNRLF.

41–50 (EREPSVGGGC) serves as a coordination point for FAD.

Belongs to the class-I pyridine nucleotide-disulfide oxidoreductase family. The cofactor is FAD.

Its subcellular location is the cytoplasm. It catalyses the reaction NAD(+) + NADPH = NADH + NADP(+). Its function is as follows. Conversion of NADPH, generated by peripheral catabolic pathways, to NADH, which can enter the respiratory chain for energy generation. The protein is Soluble pyridine nucleotide transhydrogenase of Aliivibrio fischeri (strain ATCC 700601 / ES114) (Vibrio fischeri).